The following is a 79-amino-acid chain: Major outer membrane lipoprotein Lpp 2 (79 aa).

Positions M1–G21 are cleaved as a signal peptide. C22 is lipidated: N-palmitoyl cysteine. C22 carries the S-diacylglycerol cysteine lipid modification. 2 repeats span residues N25–V35 and S39–V49. Positions I28–R76 form a coiled coil. Residues K60–K79 are disordered. K79 is subject to N6-murein peptidoglycan lysine.

The protein belongs to the Lpp family. Homotrimer.

The protein resides in the cell outer membrane. It localises to the secreted. Its subcellular location is the cell wall. In terms of biological role, a highly abundant outer membrane lipoprotein that controls the distance between the inner and outer membranes. The only protein known to be covalently linked to the peptidoglycan network (PGN). Also non-covalently binds the PGN. The link between the cell outer membrane and PGN contributes to maintenance of the structural and functional integrity of the cell envelope, and maintains the correct distance between the PGN and the outer membrane. The sequence is that of Major outer membrane lipoprotein Lpp 2 from Salmonella paratyphi A (strain ATCC 9150 / SARB42).